The chain runs to 622 residues: Low affinity potassium transport system protein Kup (622 aa).

Helical transmembrane passes span 9 to 29 (LPAVTLAAIGVVYGDIGTSPL), 52 to 72 (FLSLIFWLLILIVSLKYLLFV), 99 to 119 (TPVLVIIGLIGGSFFYGEVVI), 137 to 157 (PSLQEFIVPLSVVVLTLLFFI), 165 to 185 (VGKLFAPVMLLWFLTLGVLGV), 213 to 233 (VSFFALGAVVLAITGVEALYA), 247 to 267 (WFSAVLPSLVLNYFGQGALLL), 276 to 296 (PFFLLAPDWAMIPLLILATLA), 337 to 357 (IYIPFINWLLYIAVVLVIVSF), 363 to 383 (LAAAYGIAVTGTMVLTSILSC), 394 to 414 (LLIVSVLLLALLCLDVSMFAA), and 419 to 439 (IFSGGWLPLLLGFLMFIAMIT).

The protein belongs to the HAK/KUP transporter (TC 2.A.72) family.

The protein localises to the cell inner membrane. The enzyme catalyses K(+)(in) + H(+)(in) = K(+)(out) + H(+)(out). In terms of biological role, responsible for the low-affinity transport of potassium into the cell. Likely operates as a K(+):H(+) symporter. This chain is Low affinity potassium transport system protein Kup, found in Sodalis glossinidius (strain morsitans).